A 285-amino-acid chain; its full sequence is MTAAFKSEMAQRDRLELNKLRKLLRREVGRAIADFNMIEDGDKVMCCLSGGKDSYAMLDILLNLKKHAPISFEVIAVNLDQKQPGFPEHVLPEYLSSLGVEYYVIERDTYSIVKDKIPEGKTTCGLCSRLRRGILYDFAVEHKCTKIALGHHRDDIMETLFLNMFYGGKMRAMPPKLKSDDGRNIVIRPLAYCREKDIERYAGLREFPIIPCNLCGSQENLQRQNIKMMLQDWDKRFPGRLENMFRAVQNVLPSHLCDTRLYDFDKLERYSMEPEEFNQISVLNL.

The PP-loop motif signature appears at 49–54 (SGGKDS). The [4Fe-4S] cluster site is built by Cys124, Cys127, and Cys215.

The protein belongs to the TtcA family. In terms of assembly, homodimer. The cofactor is Mg(2+). [4Fe-4S] cluster is required as a cofactor.

The protein localises to the cytoplasm. The enzyme catalyses cytidine(32) in tRNA + S-sulfanyl-L-cysteinyl-[cysteine desulfurase] + AH2 + ATP = 2-thiocytidine(32) in tRNA + L-cysteinyl-[cysteine desulfurase] + A + AMP + diphosphate + H(+). It functions in the pathway tRNA modification. Its function is as follows. Catalyzes the ATP-dependent 2-thiolation of cytidine in position 32 of tRNA, to form 2-thiocytidine (s(2)C32). The sulfur atoms are provided by the cysteine/cysteine desulfurase (IscS) system. In Hahella chejuensis (strain KCTC 2396), this protein is tRNA-cytidine(32) 2-sulfurtransferase.